The following is a 426-amino-acid chain: MKLQKPKGTQDILSVAAAKWQYVEGVARETFKQYHYGEIRTPMFEHYEVISRSVGDTTDIVTKEMYDFYDKGDRHITLRPEGTAPVVRSYVENKLFAPEVQKPVKLYYIGSMFRYERPQAGRLREFHQIGVECFGSANPATDVETIAMAYHLFERLGIKGVTLHLNSLGNAASRAAYRQALIDYLSPMRDTLSKDSQRRLDENPLRVLDSKEKEDKIAVANAPSILDYQDEESQAHFDAVRSMLEALAIPYVIDTNMVRGLDYYNHTIFEFITEVDQSELTICAGGRYDGLVEYFGGPATPGFGFGLGLERLLLILDKQGVELPVEEGLDVYIAVLGADANVAALALTQAIRRQGFTVERDYLGRKIKAQFKSADTFKAKVVITLGESEIKAGQAVLKHNQTRQEMTVSFDQIQTDFASIFAECVQ.

Belongs to the class-II aminoacyl-tRNA synthetase family. As to quaternary structure, homodimer.

Its subcellular location is the cytoplasm. The enzyme catalyses tRNA(His) + L-histidine + ATP = L-histidyl-tRNA(His) + AMP + diphosphate + H(+). The chain is Histidine--tRNA ligase (hisS) from Streptococcus dysgalactiae subsp. equisimilis (Streptococcus equisimilis).